We begin with the raw amino-acid sequence, 136 residues long: Ciliary microtubule inner protein 1 (136 aa).

The protein resides in the cell projection. The protein localises to the cilium. This Mus musculus (Mouse) protein is Ciliary microtubule inner protein 1 (Cimip1).